Here is a 179-residue protein sequence, read N- to C-terminus: ATP synthase subunit delta (179 aa).

Belongs to the ATPase delta chain family. As to quaternary structure, F-type ATPases have 2 components, F(1) - the catalytic core - and F(0) - the membrane proton channel. F(1) has five subunits: alpha(3), beta(3), gamma(1), delta(1), epsilon(1). F(0) has three main subunits: a(1), b(2) and c(10-14). The alpha and beta chains form an alternating ring which encloses part of the gamma chain. F(1) is attached to F(0) by a central stalk formed by the gamma and epsilon chains, while a peripheral stalk is formed by the delta and b chains.

The protein localises to the cell membrane. Functionally, f(1)F(0) ATP synthase produces ATP from ADP in the presence of a proton or sodium gradient. F-type ATPases consist of two structural domains, F(1) containing the extramembraneous catalytic core and F(0) containing the membrane proton channel, linked together by a central stalk and a peripheral stalk. During catalysis, ATP synthesis in the catalytic domain of F(1) is coupled via a rotary mechanism of the central stalk subunits to proton translocation. Its function is as follows. This protein is part of the stalk that links CF(0) to CF(1). It either transmits conformational changes from CF(0) to CF(1) or is implicated in proton conduction. The sequence is that of ATP synthase subunit delta from Staphylococcus aureus (strain USA300 / TCH1516).